The primary structure comprises 340 residues: Histidinol-phosphate aminotransferase (340 aa).

Lysine 204 carries the N6-(pyridoxal phosphate)lysine modification.

Belongs to the class-II pyridoxal-phosphate-dependent aminotransferase family. Histidinol-phosphate aminotransferase subfamily. Pyridoxal 5'-phosphate serves as cofactor.

The catalysed reaction is L-histidinol phosphate + 2-oxoglutarate = 3-(imidazol-4-yl)-2-oxopropyl phosphate + L-glutamate. The protein operates within amino-acid biosynthesis; L-histidine biosynthesis; L-histidine from 5-phospho-alpha-D-ribose 1-diphosphate: step 7/9. The polypeptide is Histidinol-phosphate aminotransferase (Thermococcus gammatolerans (strain DSM 15229 / JCM 11827 / EJ3)).